A 142-amino-acid polypeptide reads, in one-letter code: Small ribosomal subunit protein bS6 (142 aa).

Residues 110 to 133 are compositionally biased toward basic and acidic residues; it reads NKKPSHAKEKHEKTEHTHSHHTEE. The segment at 110-142 is disordered; the sequence is NKKPSHAKEKHEKTEHTHSHHTEEAESVGSHSE.

The protein belongs to the bacterial ribosomal protein bS6 family.

In terms of biological role, binds together with bS18 to 16S ribosomal RNA. This chain is Small ribosomal subunit protein bS6 (rpsF), found in Helicobacter pylori (strain ATCC 700392 / 26695) (Campylobacter pylori).